Reading from the N-terminus, the 49-residue chain is Light-harvesting protein B-880 alpha chain (49 aa).

Over 1–12 the chain is Cytoplasmic; the sequence is MYKLWLLFDPRR. Residues 13–33 form a helical membrane-spanning segment; the sequence is TLVALSAFLFVLGLIIHFISL. An a bacteriochlorophyll-binding site is contributed by histidine 29. Residues 34–49 lie on the Periplasmic side of the membrane; it reads STDRFNWLEGKPAVRA.

Belongs to the antenna complex alpha subunit family. In terms of assembly, the core complex is formed by different alpha and beta chains, binding bacteriochlorophyll molecules, and arranged most probably in tetrameric structures disposed around the reaction center. The non-pigmented gamma chains may constitute additional components.

It is found in the cell inner membrane. Functionally, antenna complexes are light-harvesting systems, which transfer the excitation energy to the reaction centers. This is Light-harvesting protein B-880 alpha chain from Rhodoblastus acidophilus (Rhodopseudomonas acidophila).